The following is a 197-amino-acid chain: Holliday junction branch migration complex subunit RuvA (197 aa).

Positions 1-63 (MFEYLNGKLV…EDAHSLYGFV (63 aa)) are domain I. The domain II stretch occupies residues 64 to 142 (NESEKALFLR…ATGAVGISLL (79 aa)). The segment at 142-146 (LDAAP) is flexible linker. The tract at residues 147–197 (AGNLALEEAIEALQALGYKATELKKIEKKLEQEAGLTSEEYIKSALKLMMK) is domain III.

It belongs to the RuvA family. Homotetramer. Forms an RuvA(8)-RuvB(12)-Holliday junction (HJ) complex. HJ DNA is sandwiched between 2 RuvA tetramers; dsDNA enters through RuvA and exits via RuvB. An RuvB hexamer assembles on each DNA strand where it exits the tetramer. Each RuvB hexamer is contacted by two RuvA subunits (via domain III) on 2 adjacent RuvB subunits; this complex drives branch migration. In the full resolvosome a probable DNA-RuvA(4)-RuvB(12)-RuvC(2) complex forms which resolves the HJ.

It is found in the cytoplasm. In terms of biological role, the RuvA-RuvB-RuvC complex processes Holliday junction (HJ) DNA during genetic recombination and DNA repair, while the RuvA-RuvB complex plays an important role in the rescue of blocked DNA replication forks via replication fork reversal (RFR). RuvA specifically binds to HJ cruciform DNA, conferring on it an open structure. The RuvB hexamer acts as an ATP-dependent pump, pulling dsDNA into and through the RuvAB complex. HJ branch migration allows RuvC to scan DNA until it finds its consensus sequence, where it cleaves and resolves the cruciform DNA. The polypeptide is Holliday junction branch migration complex subunit RuvA (Lactococcus lactis subsp. cremoris (strain SK11)).